We begin with the raw amino-acid sequence, 61 residues long: Large ribosomal subunit protein bL28A (61 aa).

This sequence belongs to the bacterial ribosomal protein bL28 family.

The polypeptide is Large ribosomal subunit protein bL28A (rpmB1) (Streptomyces coelicolor (strain ATCC BAA-471 / A3(2) / M145)).